We begin with the raw amino-acid sequence, 487 residues long: Protein nucleotidyltransferase YdiU (487 aa).

8 residues coordinate ATP: glycine 90, glycine 92, arginine 93, lysine 113, aspartate 125, glycine 126, arginine 176, and arginine 183. Catalysis depends on aspartate 252, which acts as the Proton acceptor. Mg(2+) contacts are provided by asparagine 253 and aspartate 262. Aspartate 262 contributes to the ATP binding site.

It belongs to the SELO family. The cofactor is Mg(2+). Mn(2+) serves as cofactor.

It carries out the reaction L-seryl-[protein] + ATP = 3-O-(5'-adenylyl)-L-seryl-[protein] + diphosphate. The enzyme catalyses L-threonyl-[protein] + ATP = 3-O-(5'-adenylyl)-L-threonyl-[protein] + diphosphate. It catalyses the reaction L-tyrosyl-[protein] + ATP = O-(5'-adenylyl)-L-tyrosyl-[protein] + diphosphate. The catalysed reaction is L-histidyl-[protein] + UTP = N(tele)-(5'-uridylyl)-L-histidyl-[protein] + diphosphate. It carries out the reaction L-seryl-[protein] + UTP = O-(5'-uridylyl)-L-seryl-[protein] + diphosphate. The enzyme catalyses L-tyrosyl-[protein] + UTP = O-(5'-uridylyl)-L-tyrosyl-[protein] + diphosphate. Nucleotidyltransferase involved in the post-translational modification of proteins. It can catalyze the addition of adenosine monophosphate (AMP) or uridine monophosphate (UMP) to a protein, resulting in modifications known as AMPylation and UMPylation. The sequence is that of Protein nucleotidyltransferase YdiU from Pseudomonas savastanoi pv. phaseolicola (strain 1448A / Race 6) (Pseudomonas syringae pv. phaseolicola (strain 1448A / Race 6)).